Reading from the N-terminus, the 346-residue chain is 3-isopropylmalate dehydrogenase (346 aa).

NAD(+) is bound at residue 76–87 (GPKWTDPNNRPE). The substrate site is built by Arg94, Arg104, Arg132, and Asp217. Positions 217, 241, and 245 each coordinate Mg(2+). 275–287 (GSAPDIANQDIAN) provides a ligand contact to NAD(+).

The protein belongs to the isocitrate and isopropylmalate dehydrogenases family. LeuB type 1 subfamily. Homodimer. Mg(2+) is required as a cofactor. Requires Mn(2+) as cofactor.

It is found in the cytoplasm. It carries out the reaction (2R,3S)-3-isopropylmalate + NAD(+) = 4-methyl-2-oxopentanoate + CO2 + NADH. It participates in amino-acid biosynthesis; L-leucine biosynthesis; L-leucine from 3-methyl-2-oxobutanoate: step 3/4. Its function is as follows. Catalyzes the oxidation of 3-carboxy-2-hydroxy-4-methylpentanoate (3-isopropylmalate) to 3-carboxy-4-methyl-2-oxopentanoate. The product decarboxylates to 4-methyl-2 oxopentanoate. The sequence is that of 3-isopropylmalate dehydrogenase from Staphylococcus saprophyticus subsp. saprophyticus (strain ATCC 15305 / DSM 20229 / NCIMB 8711 / NCTC 7292 / S-41).